Consider the following 276-residue polypeptide: Probable endonuclease 4 (276 aa).

Positions 70, 108, 144, 177, 180, 211, 224, 226, and 256 each coordinate Zn(2+).

It belongs to the AP endonuclease 2 family. Zn(2+) is required as a cofactor.

It carries out the reaction Endonucleolytic cleavage to 5'-phosphooligonucleotide end-products.. In terms of biological role, endonuclease IV plays a role in DNA repair. It cleaves phosphodiester bonds at apurinic or apyrimidinic (AP) sites, generating a 3'-hydroxyl group and a 5'-terminal sugar phosphate. The protein is Probable endonuclease 4 of Metamycoplasma arthritidis (strain 158L3-1) (Mycoplasma arthritidis).